We begin with the raw amino-acid sequence, 926 residues long: Storkhead-box protein 2 (926 aa).

7 disordered regions span residues 1–32 (MKKTRSTTLRRAWPSSDFSDRASDRMRSRSEK), 338–391 (EEEK…HLDI), 452–529 (EMPF…SYID), 564–588 (KEPSSACSLLEPGKPPESLPSYGEL), 632–672 (GVKK…GGVA), 724–803 (LKSH…GTMQ), and 825–926 (LAPK…VTSV). Basic and acidic residues predominate over residues 18 to 32 (FSDRASDRMRSRSEK). Residues 353–378 (HSGRSKKSRTHRKSHGKSRSHSKTRV) are compositionally biased toward basic residues. The span at 379–391 (SKGDPSDGSHLDI) shows a compositional bias: basic and acidic residues. The span at 463–472 (SHSKVHRSHS) shows a compositional bias: basic residues. The span at 473 to 495 (HTQDRRSRNERSNKAKERSRSMD) shows a compositional bias: basic and acidic residues. Positions 518–529 (QDDQTPSQSYID) are enriched in polar residues. Over residues 632-658 (GVKKLSPSDRQVPHSSREPVGHKEESP) the composition is skewed to basic and acidic residues. Polar residues predominate over residues 746–769 (LGTSAAQAMPASQRQQESGGNQEA). Residues 785–799 (GANKNTEEEKNREDV) are compositionally biased toward basic and acidic residues. Composition is skewed to polar residues over residues 847-884 (MDSSSITVDSGFNSPRTRESLASNTSSIVESNRRQNPA) and 914-926 (KPSNCLQASVTSV).

This chain is Storkhead-box protein 2 (STOX2), found in Homo sapiens (Human).